A 71-amino-acid polypeptide reads, in one-letter code: Mitochondrial import protein 1 (71 aa).

The helical transmembrane segment at Y22 to A44 threads the bilayer.

This sequence belongs to the MIM1 family. In terms of assembly, component of the mitochondrial outer import machinery (MIM) complex containing at least mim1 and mim2. Interacts with mim2. Interacts with mitophagy receptor atg43.

It is found in the mitochondrion outer membrane. Component of the mitochondrial outer import machinery (MIM) complex that mediates transport of proteins into mitochondrial compartments. Promotes the insertion of tom70 into the outer mitochondrial membrane. Promotes the insertion of atg43 into the outer mitochondrial membrane. The MIM complex cooperates with the receptor tom70 in binding of precursor proteins and promotes their insertion and assembly into the outer membrane. Involved in import of the subset of proteins with multiple alpha-helical transmembrane segments. Required for the assembly of the TOM (translocase of outer membrane) receptor complex, which is responsible for the recognition and translocation of cytosolically synthesized mitochondrial preproteins. This is Mitochondrial import protein 1 from Schizosaccharomyces pombe (strain 972 / ATCC 24843) (Fission yeast).